The following is a 306-amino-acid chain: Manganese-binding lipoprotein MntA (306 aa).

A signal peptide spans 1–18 (MRQGLMAAVLFATFALTG). Cys-19 carries the N-palmitoyl cysteine lipid modification. Cys-19 carries S-diacylglycerol cysteine lipidation. Residues His-66, His-132, His-198, and Asp-278 each coordinate Mn(2+).

The protein belongs to the bacterial solute-binding protein 9 family. In terms of assembly, the complex is probably composed of two ATP-binding proteins (MntB), two transmembrane proteins (MntC and MntD) and a solute-binding protein (MntA). Interacts with FloT.

It localises to the cell membrane. The protein resides in the membrane raft. Probably part of ATP-binding cassette (ABC) transport system MntABCD involved in manganese import. Binds manganese and delivers it to the membrane permease for translocation into the cytoplasm. The chain is Manganese-binding lipoprotein MntA from Bacillus subtilis (strain 168).